A 476-amino-acid chain; its full sequence is BTB/POZ domain-containing protein KCTD8 (476 aa).

The region spanning E44–E122 is the BTB domain. Position 78 is a phosphoserine (S78). Residue R80 is modified to Omega-N-methylarginine. A disordered region spans residues S331–N412. Basic and acidic residues predominate over residues K333–S349. Residues E350–T391 show a composition bias toward polar residues. S413 is modified (phosphoserine).

In terms of assembly, interacts as a tetramer with GABBR1 and GABBR2.

It is found in the presynaptic cell membrane. Its subcellular location is the postsynaptic cell membrane. In terms of biological role, auxiliary subunit of GABA-B receptors that determine the pharmacology and kinetics of the receptor response. Increases agonist potency and markedly alter the G-protein signaling of the receptors by accelerating onset and promoting desensitization. This Mus musculus (Mouse) protein is BTB/POZ domain-containing protein KCTD8 (Kctd8).